Consider the following 157-residue polypeptide: Small ribosomal subunit protein uS7 (157 aa).

Belongs to the universal ribosomal protein uS7 family. As to quaternary structure, part of the 30S ribosomal subunit. Contacts proteins S9 and S11.

Functionally, one of the primary rRNA binding proteins, it binds directly to 16S rRNA where it nucleates assembly of the head domain of the 30S subunit. Is located at the subunit interface close to the decoding center, probably blocks exit of the E-site tRNA. The sequence is that of Small ribosomal subunit protein uS7 from Rhodopirellula baltica (strain DSM 10527 / NCIMB 13988 / SH1).